The sequence spans 183 residues: Large ribosomal subunit protein uL6 (183 aa).

This sequence belongs to the universal ribosomal protein uL6 family. As to quaternary structure, part of the 50S ribosomal subunit.

Its function is as follows. This protein binds to the 23S rRNA, and is important in its secondary structure. It is located near the subunit interface in the base of the L7/L12 stalk, and near the tRNA binding site of the peptidyltransferase center. The sequence is that of Large ribosomal subunit protein uL6 from Chlamydia trachomatis serovar D (strain ATCC VR-885 / DSM 19411 / UW-3/Cx).